The chain runs to 766 residues: 5-methyltetrahydropteroyltriglutamate--homocysteine methyltransferase (766 aa).

5-methyltetrahydropteroyltri-L-glutamate is bound by residues Arg-23 to Lys-26 and Lys-121. L-homocysteine contacts are provided by residues Ile-438–Ser-440 and Glu-491. L-methionine-binding positions include Ile-438–Ser-440 and Glu-491. 5-methyltetrahydropteroyltri-L-glutamate contacts are provided by residues Arg-522–Cys-523 and Trp-568. An L-homocysteine-binding site is contributed by Asp-606. Position 606 (Asp-606) interacts with L-methionine. Residue Glu-612 participates in 5-methyltetrahydropteroyltri-L-glutamate binding. Zn(2+) is bound by residues His-648, Cys-650, and Glu-672. His-701 functions as the Proton donor in the catalytic mechanism. Residue Cys-733 coordinates Zn(2+).

This sequence belongs to the vitamin-B12 independent methionine synthase family. Requires Zn(2+) as cofactor.

It catalyses the reaction 5-methyltetrahydropteroyltri-L-glutamate + L-homocysteine = tetrahydropteroyltri-L-glutamate + L-methionine. Its pathway is amino-acid biosynthesis; L-methionine biosynthesis via de novo pathway; L-methionine from L-homocysteine (MetE route): step 1/1. In terms of biological role, catalyzes the transfer of a methyl group from 5-methyltetrahydrofolate to homocysteine resulting in methionine formation. The polypeptide is 5-methyltetrahydropteroyltriglutamate--homocysteine methyltransferase (Photobacterium profundum (strain SS9)).